A 161-amino-acid polypeptide reads, in one-letter code: Allophycocyanin alpha-B chain (161 aa).

Position 71 is an N4-methylasparagine (Asn71). Position 81 (Cys81) interacts with (2R,3E)-phycocyanobilin.

It belongs to the phycobiliprotein family. Post-translationally, contains one covalently linked bilin chromophore.

It is found in the plastid. The protein localises to the chloroplast thylakoid membrane. Allophycocyanin is a photosynthetic bile pigment-protein complex with maximum absorption at approximately 650 nanometers. This is Allophycocyanin alpha-B chain (apcD) from Porphyra purpurea (Red seaweed).